A 1818-amino-acid chain; its full sequence is Integrin beta-4 (1818 aa).

The N-terminal stretch at 1–28 (MAGPCCSPWVKLLLLAAMLSASLPGDLA) is a signal peptide. Residues 29 to 712 (NRCKKAQVKS…HKKKDCPPGS (684 aa)) are Extracellular-facing. A PSI domain is found at 30 to 74 (RCKKAQVKSCTECIRVDKSCAYCTDELFKERRCNTQAELLAAGCR). Cystine bridges form between C31–C49, C39–C457, C42–C62, C52–C73, C246–C289, C459–C478, C470–C481, and C483–C492. A VWFA domain is found at 132 to 310 (DLYILMDFSN…KTQDYPSVPT (179 aa)). S140 and S142 together coordinate Mg(2+). Residues S142, D145, D146, and D177 each contribute to the Ca(2+) site. The tract at residues 195–200 (WPNSDP) is involved in NRG1- and IGF1-binding. Ca(2+) is bound by residues N229, D231, P233, and E234. E234 lines the Mg(2+) pocket. N-linked (GlcNAc...) asparagine glycosylation occurs at N328. E351 serves as a coordination point for Ca(2+). 4 consecutive I-EGF domains span residues 459–493 (CELQKEVRSARCHFRGDFMCGHCVCNEGWSGKTCN), 494–539 (CSTG…HFCE), 540–576 (YDNFQCPRTSGFLCNDRGRCSMGECVCEPGWTGRSCD), and 577–617 (CPLS…TTCE). A Cell attachment site motif is present at residues 473 to 475 (RGD). An N-linked (GlcNAc...) asparagine glycan is attached at N493. Disulfide bonds link C494–C522, C505–C520, C514–C525, C527–C538, C545–C559, C553–C564, C566–C575, C577–C600, C584–C598, C592–C603, and C605–C616. N-linked (GlcNAc...) asparagine glycosylation occurs at N581. N-linked (GlcNAc...) asparagine glycosylation is present at N619. Intrachain disulfides connect C628-C673, C634-C653, C637-C650, and C682-C708. N697 carries an N-linked (GlcNAc...) asparagine glycan. The helical transmembrane segment at 713 to 733 (FWWLIPLLIFLLLLLALLLLL) threads the bilayer. Residues 734–751 (CWKYCACCKACLGLLPCC) form a palmitoylated on several cysteines region. Topologically, residues 734–1818 (CWKYCACCKA…THMDQQFFQT (1085 aa)) are cytoplasmic. S773 carries the post-translational modification Phosphoserine. The Calx-beta domain maps to 981–1086 (VNITIIKEQA…QVRRFQVQLS (106 aa)). The short motif at 1005 to 1007 (RGD) is the Cell attachment site element. S1071 and S1121 each carry phosphoserine. Positions 1115–1137 (INQTLSSPPPPHGDLGAPQNPNA) are disordered. 2 consecutive Fibronectin type-III domains span residues 1131-1220 (APQN…THQE) and 1224-1323 (EPGR…TQPK). The interval 1402 to 1433 (LSASSGRSDEDGSVAGGVEGEGSGWIRGATPR) is disordered. The segment covering 1415–1426 (VAGGVEGEGSGW) has biased composition (gly residues). 3 positions are modified to phosphoserine: S1451, S1454, and S1470. T1483 bears the Phosphothreonine mark. S1490 carries the post-translational modification Phosphoserine. T1526 carries the post-translational modification Phosphothreonine. 2 consecutive Fibronectin type-III domains span residues 1526–1621 (TPTR…VHPQ) and 1639–1735 (APGP…SQVG). At S1787 the chain carries Phosphoserine.

This sequence belongs to the integrin beta chain family. Heterodimer of an alpha and a beta subunit. Beta-4 associates with alpha-6. Interacts (via cytoplasmic region) with COL17A1 (via cytoplasmic region). Interacts (via cytoplasmic region) with DST isoform 3 (via N-terminus). Interacts (via cytoplasmic domain) with DST (via N-terminus). Interacts with RAC1. ITGA6:ITGB4 is found in a ternary complex with NRG1 and ERBB3. ITGA6:ITGB4 is found in a ternary complex with IGF1 and IGF1R. ITGA6:ITGB4 interacts with IGF2. Interacts with TMEM268; this interaction prevents ITGB4 degradation. Post-translationally, palmitoylated by DHHC3 at several cysteines of the membrane-proximal region, enhancing stability and cell surface expression. Palmitoylation also promotes secondary association with tertaspanins.

It is found in the cell membrane. The protein resides in the cell junction. Its subcellular location is the hemidesmosome. Functionally, integrin alpha-6/beta-4 is a receptor for laminin. It plays a critical structural role in the hemidesmosome of epithelial cells. Is required for the regulation of keratinocyte polarity and motility. ITGA6:ITGB4 binds to NRG1 (via EGF domain) and this binding is essential for NRG1-ERBB signaling. ITGA6:ITGB4 binds to IGF1 and this binding is essential for IGF1 signaling. ITGA6:ITGB4 binds to IGF2 and this binding is essential for IGF2 signaling. This is Integrin beta-4 (Itgb4) from Mus musculus (Mouse).